The sequence spans 335 residues: Holliday junction branch migration complex subunit RuvB (335 aa).

The large ATPase domain (RuvB-L) stretch occupies residues 2–184 (ADERIVSAEN…FGIVEHMAYY (183 aa)). ATP-binding positions include Leu23, Arg24, Gly65, Lys68, Thr69, Thr70, 131–133 (EDF), Arg174, Tyr184, and Arg221. Thr69 contacts Mg(2+). A small ATPAse domain (RuvB-S) region spans residues 185 to 255 (TEADLMDIVQ…IADHALSQLQ (71 aa)). A head domain (RuvB-H) region spans residues 258–335 (IRGLDGVDRK…AHLGMPYPEK (78 aa)). 2 residues coordinate DNA: Arg313 and Arg318.

This sequence belongs to the RuvB family. In terms of assembly, homohexamer. Forms an RuvA(8)-RuvB(12)-Holliday junction (HJ) complex. HJ DNA is sandwiched between 2 RuvA tetramers; dsDNA enters through RuvA and exits via RuvB. An RuvB hexamer assembles on each DNA strand where it exits the tetramer. Each RuvB hexamer is contacted by two RuvA subunits (via domain III) on 2 adjacent RuvB subunits; this complex drives branch migration. In the full resolvosome a probable DNA-RuvA(4)-RuvB(12)-RuvC(2) complex forms which resolves the HJ.

It localises to the cytoplasm. It catalyses the reaction ATP + H2O = ADP + phosphate + H(+). Functionally, the RuvA-RuvB-RuvC complex processes Holliday junction (HJ) DNA during genetic recombination and DNA repair, while the RuvA-RuvB complex plays an important role in the rescue of blocked DNA replication forks via replication fork reversal (RFR). RuvA specifically binds to HJ cruciform DNA, conferring on it an open structure. The RuvB hexamer acts as an ATP-dependent pump, pulling dsDNA into and through the RuvAB complex. RuvB forms 2 homohexamers on either side of HJ DNA bound by 1 or 2 RuvA tetramers; 4 subunits per hexamer contact DNA at a time. Coordinated motions by a converter formed by DNA-disengaged RuvB subunits stimulates ATP hydrolysis and nucleotide exchange. Immobilization of the converter enables RuvB to convert the ATP-contained energy into a lever motion, pulling 2 nucleotides of DNA out of the RuvA tetramer per ATP hydrolyzed, thus driving DNA branch migration. The RuvB motors rotate together with the DNA substrate, which together with the progressing nucleotide cycle form the mechanistic basis for DNA recombination by continuous HJ branch migration. Branch migration allows RuvC to scan DNA until it finds its consensus sequence, where it cleaves and resolves cruciform DNA. This chain is Holliday junction branch migration complex subunit RuvB, found in Latilactobacillus sakei subsp. sakei (strain 23K) (Lactobacillus sakei subsp. sakei).